We begin with the raw amino-acid sequence, 360 residues long: Protein NDRG2 (360 aa).

The segment at 324-360 (SRTASLSSEGNRSRSRTLSQSSESGGGPPAPLAEVTC) is disordered.

It belongs to the NDRG family.

The protein localises to the cytoplasm. Its function is as follows. Contributes to the regulation of the Wnt signaling pathway. Down-regulates CTNNB1-mediated transcriptional activation of target genes. May be involved in neuron differentiation. The chain is Protein NDRG2 (ndrg2) from Xenopus laevis (African clawed frog).